The following is a 91-amino-acid chain: MKPMYRSRSWRRKYVRTPGGRVVVHFERKKPKIAHCAICGRPLNGIPRGRPVEMRKLPKTKKRPERPMPYLCPRCMRRVMKEQIRSQIMKG.

The segment at 48-69 (RGRPVEMRKLPKTKKRPERPMP) is disordered.

This sequence belongs to the eukaryotic ribosomal protein eL34 family.

This is Large ribosomal subunit protein eL34 (rpl34e) from Pyrococcus horikoshii (strain ATCC 700860 / DSM 12428 / JCM 9974 / NBRC 100139 / OT-3).